Reading from the N-terminus, the 421-residue chain is 3-isopropylmalate dehydratase large subunit (421 aa).

3 residues coordinate [4Fe-4S] cluster: C302, C362, and C365.

Belongs to the aconitase/IPM isomerase family. LeuC type 2 subfamily. Heterodimer of LeuC and LeuD. It depends on [4Fe-4S] cluster as a cofactor.

It catalyses the reaction (2R,3S)-3-isopropylmalate = (2S)-2-isopropylmalate. It functions in the pathway amino-acid biosynthesis; L-leucine biosynthesis; L-leucine from 3-methyl-2-oxobutanoate: step 2/4. Catalyzes the isomerization between 2-isopropylmalate and 3-isopropylmalate, via the formation of 2-isopropylmaleate. The chain is 3-isopropylmalate dehydratase large subunit from Nitratiruptor sp. (strain SB155-2).